The chain runs to 741 residues: uncharacterized protein (741 aa).

Positions 64 to 103 form a coiled coil; that stretch reads VETLLCMLEQLTIRIEFLTKEIAQQEAAYKDIQNTQKSLV. A compositionally biased stretch (polar residues) spans 137–155; sequence FERQNRTAPLQSKVTTASL. Disordered regions lie at residues 137-214, 280-318, and 330-364; these read FERQ…TGLP, RTYS…SKSS, and SVSS…FLTP. 2 stretches are compositionally biased toward low complexity: residues 161 to 173 and 197 to 209; these read RTSM…ASRT and KSKS…KSLA. The segment covering 298–308 has biased composition (polar residues); sequence SHLPNRTTEVP. 2 stretches are compositionally biased toward low complexity: residues 309–318 and 330–344; these read SISKQLSKSS and SVSS…TPQS. Positions 346 to 356 are enriched in polar residues; the sequence is PRAQSASTETA. 499–506 serves as a coordination point for ATP; that stretch reads GPPGTGKT.

Belongs to the AAA ATPase family.

Its subcellular location is the cytoplasm. The protein resides in the nucleus. This is an uncharacterized protein from Schizosaccharomyces pombe (strain 972 / ATCC 24843) (Fission yeast).